Here is a 211-residue protein sequence, read N- to C-terminus: GATA transcription factor 19 (211 aa).

The GATA-type zinc finger occupies 77–102 (CANCDTTSTPLWRNGPRGPKSLCNAC). Residues 111-131 (RRASTARNSTSGGGSTAAGVP) form a disordered region.

Belongs to the type IV zinc-finger family. Class B subfamily. In terms of assembly, forms heterodimers with GATA18.

It is found in the nucleus. Its function is as follows. Transcriptional regulator that specifically binds 5'-GATA-3' or 5'-GAT-3' motifs within gene promoters. Regulates both flower and shoot apical meristem (SAM) development, especially for establishing organ boundaries in shoots and flowers, probably by controlling the number and position of WUS-expressing cells. The polypeptide is GATA transcription factor 19 (Arabidopsis thaliana (Mouse-ear cress)).